Consider the following 292-residue polypeptide: Xyloglucan endotransglucosylase/hydrolase protein A (292 aa).

The signal sequence occupies residues 1 to 20; the sequence is MGSSLWTCLILLSLASASFA. The region spanning 21–219 is the GH16 domain; that stretch reads ANPRTPIDVP…WSKAPFIASY (199 aa). Catalysis depends on glutamate 105, which acts as the Nucleophile. Glutamate 109 functions as the Proton donor in the catalytic mechanism. Glutamate 109 contacts xyloglucan. N-linked (GlcNAc...) asparagine glycosylation is present at asparagine 113. Residues 122-124, 132-134, 198-199, and glycine 203 contribute to the xyloglucan site; these read QTN, DRE, and DW. Disulfide bonds link cysteine 227–cysteine 236 and cysteine 273–cysteine 286. Arginine 278 lines the xyloglucan pocket.

Belongs to the glycosyl hydrolase 16 family. XTH group 1 subfamily. In terms of processing, contains at least one intrachain disulfide bond essential for its enzymatic activity. As to expression, predominantly expressed in the phloem fibers of growing internodes. Expressed in xylem cells in the basal part of the internode. In the internode, it is expressed closer to the top of the internode compared to XTHB.

The protein localises to the secreted. The protein resides in the cell wall. It is found in the extracellular space. It localises to the apoplast. The enzyme catalyses breaks a beta-(1-&gt;4) bond in the backbone of a xyloglucan and transfers the xyloglucanyl segment on to O-4 of the non-reducing terminal glucose residue of an acceptor, which can be a xyloglucan or an oligosaccharide of xyloglucan.. In terms of biological role, catalyzes xyloglucan endohydrolysis (XEH) and/or endotransglycosylation (XET). Cleaves and religates xyloglucan polymers, an essential constituent of the primary cell wall, and thereby participates in cell wall construction of growing tissues. In Phaseolus angularis (Azuki bean), this protein is Xyloglucan endotransglucosylase/hydrolase protein A (XTHA).